The primary structure comprises 270 residues: MKRLRVFVVSDSVGETGDQVAKAVISQFRPGLENTVIRRFPHIQSEELIRKIVFLAAQQQAFIVYTLVRQEMRKLLRDLCEQEKIHAVDIIGPALQSMATFMEENPLETPGIVHMLDDDYFKKIEAIEFAVKYDDGRDPRGLLQADIVLVGVSRTSKTPLSQYLAHKKYKVANVPLVPEVEPPEELLQLDPKKCFGLIISPEKLNSIRKERLMSLGLNDDAIYAQHNRILEEIQHFEKIVGKIGCRVIDVTNKAVEETANTIIEHILTCK.

151-158 serves as a coordination point for ADP; the sequence is GVSRTSKT.

Belongs to the pyruvate, phosphate/water dikinase regulatory protein family. PDRP subfamily.

It carries out the reaction N(tele)-phospho-L-histidyl/L-threonyl-[pyruvate, phosphate dikinase] + ADP = N(tele)-phospho-L-histidyl/O-phospho-L-threonyl-[pyruvate, phosphate dikinase] + AMP + H(+). The enzyme catalyses N(tele)-phospho-L-histidyl/O-phospho-L-threonyl-[pyruvate, phosphate dikinase] + phosphate + H(+) = N(tele)-phospho-L-histidyl/L-threonyl-[pyruvate, phosphate dikinase] + diphosphate. Functionally, bifunctional serine/threonine kinase and phosphorylase involved in the regulation of the pyruvate, phosphate dikinase (PPDK) by catalyzing its phosphorylation/dephosphorylation. The chain is Putative pyruvate, phosphate dikinase regulatory protein from Lysinibacillus sphaericus (strain C3-41).